Reading from the N-terminus, the 30-residue chain is Cyclotide hyen-D (30 aa).

Positions 1–30 form a cross-link, cyclopeptide (Gly-Asn); that stretch reads GFPCGESCVYIPCFTAAIGCSCKSKVCYKN. 3 disulfide bridges follow: Cys-4–Cys-20, Cys-8–Cys-22, and Cys-13–Cys-27.

In terms of processing, this is a cyclic peptide. In terms of tissue distribution, detected in stems (at protein level).

Functionally, probably participates in a plant defense mechanism. Has strong cytotoxic activity against HUVEC cells (LC(50)= 0.58 uM) and various cancer cells including HeLa (LC(50)= 0.48 uM), MCF-7 and K562. Also displays some hemolytic activity. Binds to and induces leakage in phospholipd membranes, particularly ones containing 1-palmitoyl-2-oleophosphatidylethanolamine (POPE). The polypeptide is Cyclotide hyen-D (Pigea enneasperma (Spade flower)).